A 205-amino-acid polypeptide reads, in one-letter code: Holliday junction branch migration complex subunit RuvA (205 aa).

A domain I region spans residues 1 to 64 (MIGKLKGTID…EDQLKLFGFM (64 aa)). Positions 65 to 143 (SALEREWFNL…AFTGDAGSAI (79 aa)) are domain II. Positions 144–153 (GLKQELGEGV) are flexible linker. Positions 153 to 205 (VASAPVSDAVSALTNLGYSRDQAANAIAAALKNGGEGADSAKLIRLGLKELSR) are domain III.

It belongs to the RuvA family. As to quaternary structure, homotetramer. Forms an RuvA(8)-RuvB(12)-Holliday junction (HJ) complex. HJ DNA is sandwiched between 2 RuvA tetramers; dsDNA enters through RuvA and exits via RuvB. An RuvB hexamer assembles on each DNA strand where it exits the tetramer. Each RuvB hexamer is contacted by two RuvA subunits (via domain III) on 2 adjacent RuvB subunits; this complex drives branch migration. In the full resolvosome a probable DNA-RuvA(4)-RuvB(12)-RuvC(2) complex forms which resolves the HJ.

Its subcellular location is the cytoplasm. The RuvA-RuvB-RuvC complex processes Holliday junction (HJ) DNA during genetic recombination and DNA repair, while the RuvA-RuvB complex plays an important role in the rescue of blocked DNA replication forks via replication fork reversal (RFR). RuvA specifically binds to HJ cruciform DNA, conferring on it an open structure. The RuvB hexamer acts as an ATP-dependent pump, pulling dsDNA into and through the RuvAB complex. HJ branch migration allows RuvC to scan DNA until it finds its consensus sequence, where it cleaves and resolves the cruciform DNA. The sequence is that of Holliday junction branch migration complex subunit RuvA from Allorhizobium ampelinum (strain ATCC BAA-846 / DSM 112012 / S4) (Agrobacterium vitis (strain S4)).